The following is a 231-amino-acid chain: U1 small nuclear ribonucleoprotein C (231 aa).

Residues Y4–D36 form a Matrin-type zinc finger. Over residues H49–R61 the composition is skewed to basic residues. Disordered regions lie at residues H49 to E71, P137 to P177, and E205 to N231.

Belongs to the U1 small nuclear ribonucleoprotein C family. As to quaternary structure, U1 snRNP is composed of the 7 core Sm proteins SMB1, SMD1, SMD2, SMD3, SME1, SMX3 and SMX2 (Sm proteins B, D1, D2, D3, E, F and G, respectively) that assemble in a heptameric protein ring on the Sm site of the small nuclear RNA to form the core snRNP, and at least 10 U1 snRNP-specific proteins SNP1/U1-70K, MUD1/U1-A, YHC1/U1-C, LUC7, NAM8, PRP39, PRP40, PRP42, SNU56 and SNU71. YHC1/U1-C interacts with U1 snRNA and the 5' splice-site region of the pre-mRNA.

It is found in the nucleus. In terms of biological role, component of the spliceosomal U1 snRNP, which is essential for recognition of the pre-mRNA 5' splice-site and the subsequent assembly of the spliceosome. YHC1/U1-C is directly involved in initial 5' splice-site recognition for both constitutive and regulated alternative splicing. The interaction with the 5' splice-site seems to precede base-pairing between the pre-mRNA and the U1 snRNA. Stimulates commitment or early (E) complex formation by stabilizing the base pairing of the 5' end of the U1 snRNA and the 5' splice-site region. This is U1 small nuclear ribonucleoprotein C from Saccharomyces cerevisiae (strain ATCC 204508 / S288c) (Baker's yeast).